Consider the following 204-residue polypeptide: Lysozyme G (204 aa).

An N-terminal signal peptide occupies residues 1 to 19; sequence MHLMLVLLGLAALLGTSQS. 2 disulfide bridges follow: cysteine 23–cysteine 79 and cysteine 37–cysteine 48. Residues glutamate 92 and aspartate 105 contribute to the active site.

It belongs to the glycosyl hydrolase 23 family.

Its subcellular location is the secreted. It carries out the reaction Hydrolysis of (1-&gt;4)-beta-linkages between N-acetylmuramic acid and N-acetyl-D-glucosamine residues in a peptidoglycan and between N-acetyl-D-glucosamine residues in chitodextrins.. Functionally, has bacteriolytic activity against M.luteus. In Dromaius novaehollandiae (Emu), this protein is Lysozyme G.